Reading from the N-terminus, the 109-residue chain is MLVILLMVVVLALSSAQDPNRDFVVSSQDVRERQPSSQQGTVGGQSQESQLRDQQQQQSLQQSQEQQPQPQLQQTKQPQRPVKGQPLPQQQQQQNQRPRPRYQQPRRAV.

Positions Met-1–Ala-16 are cleaved as a signal peptide. Gln-17 is modified (pyrrolidone carboxylic acid). Residues Gln-17–Val-109 form a disordered region. Positions Pro-35–Val-109 are enriched in low complexity. A propeptide spanning residues Arg-107 to Val-109 is cleaved from the precursor.

Post-translationally, predominantly proteolytically processed at its C-terminus before secretion to produce the major form gliadoralin A 1-90. Further proteloytically processed after secretion to produce minor forms. Potential substrate of transglutaminase. Found in saliva (at protein level). Secreted from the submandibular gland.

It is found in the secreted. May play a role in the formation of the protective mucosal protein pellicle involved in the reinforcement and protection of oral mucosal epithelial surface. This is Gliadoralin-A from Rattus norvegicus (Rat).